Consider the following 631-residue polypeptide: ATP-dependent DNA helicase 2 subunit 1 (631 aa).

The Ku domain occupies 262-487; sequence FYLGPNLSMS…VEFFQKIIKK (226 aa). The interval 550 to 570 is disordered; that stretch reads AEPHKKRAAKSTTAGASGPKM.

It belongs to the ku70 family. Heterodimer of a 70 kDa and a 80 kDa subunit.

The protein resides in the nucleus. Its subcellular location is the chromosome. The enzyme catalyses ATP + H2O = ADP + phosphate + H(+). In terms of biological role, single-stranded DNA-dependent ATP-dependent helicase. Involved in non-homologous end joining (NHEJ) DNA double strand break repair. Sequence-specific DNA-binding protein that has a high affinity for a 31 bp sequence in the Yp1 gene. Site-specific DNA binding to 31 bp P element inverted repeats. The sequence is that of ATP-dependent DNA helicase 2 subunit 1 (Irbp) from Drosophila melanogaster (Fruit fly).